A 487-amino-acid polypeptide reads, in one-letter code: Zinc finger and BTB domain-containing protein 32 (487 aa).

The BTB domain maps to 29–87; that stretch reads CDTLITVGSQEFPAHSLVLAGVSQQLGRRGQWALGEGISPSTFAQLLNFVYGESVELQP. The span at 112–166 shows a compositional bias: basic and acidic residues; the sequence is ARGDRAKKPDPGLKKHQEEPEKPSRNPERELGDPGEKQKPEQVSRTGGREQEMLH. Disordered stretches follow at residues 112–244 and 308–371; these read ARGD…TSVT and QNQL…ARSR. A compositionally biased stretch (polar residues) spans 308-320; it reads QNQLASSSPTPGS. Positions 357–369 are enriched in pro residues; sequence PPRPHPPPAPPAR. 3 consecutive C2H2-type zinc fingers follow at residues 373–395, 401–423, and 428–450; these read YACS…YRVH, FSCS…LRTH, and YRCS…MRGH. The interval 468 to 487 is disordered; the sequence is SSSRPSRPSTSPCCPSSSTT.

Belongs to the krueppel C2H2-type zinc-finger protein family. Homodimer (via PTB domain). Interacts with the N-terminal of FANCC. Interacts with ZBTB16. Interacts with GATA3. In terms of tissue distribution, predominantly expressed in testis. Some isoforms are ubiquitously expressed.

It localises to the nucleus. Functionally, DNA-binding protein that binds to the to a 5'-TGTACAGTGT-3' core sequence. May function as a transcriptional transactivator and transcriptional repressor. Probably exerts its repressor effect by preventing GATA3 from binding to DNA. May play a role in regulating the differentiation and activation of helper T-cells. The sequence is that of Zinc finger and BTB domain-containing protein 32 (ZBTB32) from Homo sapiens (Human).